The sequence spans 86 residues: Precursor of CEP4 (86 aa).

Residues 1–30 (MVSRGCSITVLFRFLIVLLVIQVHFENTKA) form the signal peptide. Residues 31-64 (ARHAPVVSWSPPEPPKDDFVWYHKINRFKNIEQD) constitute a propeptide that is removed on maturation. The segment at 63–86 (QDAFRPTHQGPSQGIGHKNPPGAP) is disordered. Pro-68 and Pro-73 each carry hydroxyproline. The propeptide occupies 80 to 86 (KNPPGAP).

The protein belongs to the C-terminally encoded plant signaling peptide (CEP) family. In terms of assembly, interacts with CEP receptors (e.g. CEPR1 and CEPR2). The mature small signaling peptide is generated by proteolytic processing of the longer precursor. In terms of tissue distribution, expressed at low levels in flowers. Present in lateral roots, shoot apical meristem (SAM), flowers and siliques.

The protein resides in the secreted. It is found in the extracellular space. It localises to the apoplast. Extracellular signaling peptide that represses primary root growth rate. Promotes shoot growth and modulates leaf morphology. Regulates systemic nitrogen (N)-demand signaling. Mediates up-regulation of genes involved in N uptake and assimilation pathways. This Arabidopsis thaliana (Mouse-ear cress) protein is Precursor of CEP4.